Reading from the N-terminus, the 571-residue chain is MGLCFSSAAKSSGHNRSSRNPHPHPPLTVVKSRPPRSPCSFMAVTIQKDHRTQPRRNATAKKTPTRHTPPHGKVREKVISNNGRRHGETIPYGKRVDFGYAKDFDHRYTIGKLLGHGQFGYTYVATDKKTGDRVAVKKIDKAKMTIPIAVEDVKREVKILQALTGHENVVRFYNAFEDKNSVYIVMELCEGGELLDRILARKDSRYSERDAAVVVRQMLKVAAECHLRGLVHRDMKPENFLFKSTEEDSPLKATDFGLSDFIKPGKKFHDIVGSAYYVAPEVLKRRSGPESDVWSIGVISYILLCGRRPFWDKTEDGIFKEVLKNKPDFRRKPWPTISNSAKDFVKKLLVKDPRARLTAAQALSHPWVREGGDASEIPIDISVLNNMRQFVKFSRLKQFALRALATTLDEEELADLRDQFDAIDVDKNGVISLEEMRQALAKDHPWKLKDARVAEILQAIDSNTDGFVDFGEFVAAALHVNQLEEHDSEKWQQRSRAAFEKFDIDGDGFITAEELRMHTGLKGSIEPLLEEADIDNDGKISLQEFRRLLRTASIKSRNVRSPPGYLISRKV.

Positions 1–74 (MGLCFSSAAK…TRHTPPHGKV (74 aa)) are disordered. A lipid anchor (N-myristoyl glycine) is attached at glycine 2. Cysteine 4 is lipidated: S-palmitoyl cysteine. Residues 63-72 (TPTRHTPPHG) are compositionally biased toward basic residues. One can recognise a Protein kinase domain in the interval 108 to 368 (YTIGKLLGHG…AAQALSHPWV (261 aa)). Residues 114–122 (LGHGQFGYT) and lysine 137 each bind ATP. Residue aspartate 234 is the Proton acceptor of the active site. Serine 274 is modified (phosphoserine). Positions 374–404 (ASEIPIDISVLNNMRQFVKFSRLKQFALRAL) are autoinhibitory domain. 4 consecutive EF-hand domains span residues 411 to 446 (EELA…DHPW), 448 to 483 (LKDA…VNQL), 490 to 525 (KWQQ…KGSI), and 528 to 555 (LLEE…ASIK). 16 residues coordinate Ca(2+): aspartate 424, aspartate 426, asparagine 428, glutamate 435, aspartate 461, asparagine 463, aspartate 465, glutamate 472, aspartate 503, aspartate 505, aspartate 507, glutamate 514, aspartate 533, aspartate 535, aspartate 537, and lysine 539. Position 541 is a phosphoserine (serine 541). A Ca(2+)-binding site is contributed by glutamate 544.

The protein belongs to the protein kinase superfamily. Ser/Thr protein kinase family. CDPK subfamily.

The protein localises to the cell membrane. It localises to the nucleus. It carries out the reaction L-seryl-[protein] + ATP = O-phospho-L-seryl-[protein] + ADP + H(+). The catalysed reaction is L-threonyl-[protein] + ATP = O-phospho-L-threonyl-[protein] + ADP + H(+). With respect to regulation, activated by calcium. Autophosphorylation may play an important role in the regulation of the kinase activity. Its function is as follows. May play a role in signal transduction pathways that involve calcium as a second messenger. This chain is Calcium-dependent protein kinase 16 (CPK16), found in Arabidopsis thaliana (Mouse-ear cress).